An 86-amino-acid chain; its full sequence is Large ribosomal subunit protein bL27 (86 aa).

A disordered region spans residues 1-26 (MAHKKAAGSTRNGRDSESKRLGVKRY).

This sequence belongs to the bacterial ribosomal protein bL27 family.

The chain is Large ribosomal subunit protein bL27 from Marinobacter nauticus (strain ATCC 700491 / DSM 11845 / VT8) (Marinobacter aquaeolei).